The primary structure comprises 177 residues: Embryogenesis-like protein (177 aa).

Positions 98–118 (VDEINLKFAEAREEIEMAMDA) form a coiled coil.

In terms of assembly, interacts with HAG1/GCN5. As to expression, expressed in flowers, leaves, stems and siliques.

The protein localises to the nucleus. Functionally, activates gene expression by recruiting HAG1/GCN5 and triggering subsequent histone H3 acetylation of target genes promoters. In Arabidopsis thaliana (Mouse-ear cress), this protein is Embryogenesis-like protein.